A 60-amino-acid polypeptide reads, in one-letter code: Regulatory protein DegR (60 aa).

Functionally, stabilizes the phosphorylated form of DegU, leading to enhanced production of levansucrase, alkaline protease, and neutral protease. The chain is Regulatory protein DegR (degR) from Bacillus subtilis subsp. natto.